The sequence spans 257 residues: UPF0246 protein Mpe_A2092 (257 aa).

The protein belongs to the UPF0246 family.

The protein is UPF0246 protein Mpe_A2092 of Methylibium petroleiphilum (strain ATCC BAA-1232 / LMG 22953 / PM1).